A 359-amino-acid polypeptide reads, in one-letter code: Protein Wnt-2 (359 aa).

Residues 1 to 25 (MNAPLAGIWPWLPLLWAWLVPEVSS) form the signal peptide. 11 cysteine pairs are disulfide-bonded: cysteine 75–cysteine 86, cysteine 126–cysteine 134, cysteine 136–cysteine 156, cysteine 205–cysteine 219, cysteine 207–cysteine 214, cysteine 277–cysteine 308, cysteine 293–cysteine 303, cysteine 307–cysteine 347, cysteine 323–cysteine 338, cysteine 325–cysteine 335, and cysteine 330–cysteine 331. Serine 211 carries the O-palmitoleoyl serine; by PORCN lipid modification. Asparagine 294 carries N-linked (GlcNAc...) asparagine glycosylation.

It belongs to the Wnt family. Post-translationally, palmitoleoylation is required for efficient binding to frizzled receptors. Depalmitoleoylation leads to Wnt signaling pathway inhibition.

It is found in the secreted. The protein resides in the extracellular space. The protein localises to the extracellular matrix. Functionally, ligand for members of the frizzled family of seven transmembrane receptors. Probable developmental protein. May be a signaling molecule which affects the development of discrete regions of tissues. Is likely to signal over only few cell diameters. The sequence is that of Protein Wnt-2 (WNT2) from Echinops telfairi (Lesser hedgehog tenrec).